An 807-amino-acid chain; its full sequence is Leucine--tRNA ligase (807 aa).

A 'HIGH' region motif is present at residues proline 40–histidine 51. Residues lysine 576–serine 580 carry the 'KMSKS' region motif. Lysine 579 provides a ligand contact to ATP.

Belongs to the class-I aminoacyl-tRNA synthetase family.

It is found in the cytoplasm. The catalysed reaction is tRNA(Leu) + L-leucine + ATP = L-leucyl-tRNA(Leu) + AMP + diphosphate. The sequence is that of Leucine--tRNA ligase from Chlorobaculum tepidum (strain ATCC 49652 / DSM 12025 / NBRC 103806 / TLS) (Chlorobium tepidum).